We begin with the raw amino-acid sequence, 363 residues long: AA9 family lytic polysaccharide monooxygenase I (363 aa).

Residues 1 to 19 form the signal peptide; the sequence is MSLFKFAAFVLGTAGSVAG. Cu(2+) is bound by residues His-20 and His-105. 2 disulfide bridges follow: Cys-75–Cys-197 and Cys-116–Cys-120. The O2 site is built by His-183 and Gln-192. Position 194 (Tyr-194) interacts with Cu(2+). Positions 248 to 257 are enriched in polar residues; it reads GSDSNTATSG. Disordered regions lie at residues 248 to 270 and 298 to 363; these read GSDS…PTTT and SVSY…RTQS. The segment covering 258-270 has biased composition (low complexity); sequence ASPPSTNFSPTTT. A compositionally biased stretch (polar residues) spans 298 to 307; that stretch reads SVSYSQTPWP. Residues 308-329 are compositionally biased toward low complexity; that stretch reads SSTATEATSASSSAGGSNNGHT. Over residues 342-354 the composition is skewed to basic residues; sequence TGKKRSRLNRRRM.

Belongs to the polysaccharide monooxygenase AA9 family. Cu(2+) serves as cofactor.

It is found in the secreted. It catalyses the reaction [(1-&gt;4)-beta-D-glucosyl]n+m + reduced acceptor + O2 = 4-dehydro-beta-D-glucosyl-[(1-&gt;4)-beta-D-glucosyl]n-1 + [(1-&gt;4)-beta-D-glucosyl]m + acceptor + H2O.. Its function is as follows. Lytic polysaccharide monooxygenase (LPMO) that depolymerizes crystalline and amorphous polysaccharides via the oxidation of scissile alpha- or beta-(1-4)-glycosidic bonds, yielding C1 or C4 oxidation products. Catalysis by LPMOs requires the reduction of the active-site copper from Cu(II) to Cu(I) by a reducing agent and H(2)O(2) or O(2) as a cosubstrate. The sequence is that of AA9 family lytic polysaccharide monooxygenase I from Emericella nidulans (strain FGSC A4 / ATCC 38163 / CBS 112.46 / NRRL 194 / M139) (Aspergillus nidulans).